A 234-amino-acid polypeptide reads, in one-letter code: Glucosamine-6-phosphate deaminase (234 aa).

Catalysis depends on D63, which acts as the Proton acceptor; for enolization step. Catalysis depends on N129, which acts as the For ring-opening step. H131 serves as the catalytic Proton acceptor; for ring-opening step. The active-site For ring-opening step is the E136.

This sequence belongs to the glucosamine/galactosamine-6-phosphate isomerase family. NagB subfamily.

The enzyme catalyses alpha-D-glucosamine 6-phosphate + H2O = beta-D-fructose 6-phosphate + NH4(+). It functions in the pathway amino-sugar metabolism; N-acetylneuraminate degradation; D-fructose 6-phosphate from N-acetylneuraminate: step 5/5. In terms of biological role, catalyzes the reversible isomerization-deamination of glucosamine 6-phosphate (GlcN6P) to form fructose 6-phosphate (Fru6P) and ammonium ion. The protein is Glucosamine-6-phosphate deaminase of Listeria innocua serovar 6a (strain ATCC BAA-680 / CLIP 11262).